Reading from the N-terminus, the 168-residue chain is Lipoprotein signal peptidase (168 aa).

The next 4 helical transmembrane spans lie at 5 to 25 (SPYA…KHLV), 37 to 57 (LVPF…SMFS), 59 to 79 (FGDT…LYLA), and 85 to 105 (GHVI…GNLI). Residues Asp115 and Asp133 contribute to the active site. The helical transmembrane segment at 125–145 (SFAIFNLADAFISVGAALVVF) threads the bilayer.

The protein belongs to the peptidase A8 family.

It localises to the cell inner membrane. The enzyme catalyses Release of signal peptides from bacterial membrane prolipoproteins. Hydrolyzes -Xaa-Yaa-Zaa-|-(S,diacylglyceryl)Cys-, in which Xaa is hydrophobic (preferably Leu), and Yaa (Ala or Ser) and Zaa (Gly or Ala) have small, neutral side chains.. Its pathway is protein modification; lipoprotein biosynthesis (signal peptide cleavage). In terms of biological role, this protein specifically catalyzes the removal of signal peptides from prolipoproteins. This is Lipoprotein signal peptidase from Mesorhizobium japonicum (strain LMG 29417 / CECT 9101 / MAFF 303099) (Mesorhizobium loti (strain MAFF 303099)).